The following is a 348-amino-acid chain: UDP-3-O-acylglucosamine N-acyltransferase (348 aa).

The Proton acceptor role is filled by H241.

The protein belongs to the transferase hexapeptide repeat family. LpxD subfamily. As to quaternary structure, homotrimer.

It carries out the reaction a UDP-3-O-[(3R)-3-hydroxyacyl]-alpha-D-glucosamine + a (3R)-hydroxyacyl-[ACP] = a UDP-2-N,3-O-bis[(3R)-3-hydroxyacyl]-alpha-D-glucosamine + holo-[ACP] + H(+). It functions in the pathway bacterial outer membrane biogenesis; LPS lipid A biosynthesis. Catalyzes the N-acylation of UDP-3-O-acylglucosamine using 3-hydroxyacyl-ACP as the acyl donor. Is involved in the biosynthesis of lipid A, a phosphorylated glycolipid that anchors the lipopolysaccharide to the outer membrane of the cell. In Neisseria meningitidis serogroup B (strain ATCC BAA-335 / MC58), this protein is UDP-3-O-acylglucosamine N-acyltransferase.